A 505-amino-acid chain; its full sequence is ATP synthase subunit alpha, chloroplastic (505 aa).

Gly170–Thr177 contacts ATP.

Belongs to the ATPase alpha/beta chains family. F-type ATPases have 2 components, CF(1) - the catalytic core - and CF(0) - the membrane proton channel. CF(1) has five subunits: alpha(3), beta(3), gamma(1), delta(1), epsilon(1). CF(0) has four main subunits: a, b, b' and c.

The protein resides in the plastid. It is found in the chloroplast thylakoid membrane. It catalyses the reaction ATP + H2O + 4 H(+)(in) = ADP + phosphate + 5 H(+)(out). Produces ATP from ADP in the presence of a proton gradient across the membrane. The alpha chain is a regulatory subunit. This Zygnema circumcarinatum (Green alga) protein is ATP synthase subunit alpha, chloroplastic.